We begin with the raw amino-acid sequence, 392 residues long: Basic salivary proline-rich protein 1 (392 aa).

Positions 1–16 (MLLILLSVALLALSSA) are cleaved as a signal peptide. Residue Q17 is modified to Pyrrolidone carboxylic acid. A compositionally biased stretch (polar residues) spans 19–28 (LNEDVSQEES). Positions 19–392 (LNEDVSQEES…QGGRPSRPPQ (374 aa)) are disordered. Residues 34-47 (GNPQGPSPQGGNKP) are compositionally biased toward low complexity. S40 bears the Phosphoserine; alternate mark. O-linked (Hex) serine; alternate glycosylation is present at S40. Residues 48-83 (QGPPPPPGKPQGPPPQGGNKPQGPPPPGKPQGPPPQ) show a composition bias toward pro residues. 15 tandem repeats follow at residues 53 to 72 (PPGK…QGPP), 73 to 92 (PPGK…SPRS), 93 to 112 (PPGK…QGPP), 114 to 133 (PPGK…QGPP), 134 to 153 (PPGK…SPRS), 154 to 173 (PPGK…QGPP), 175 to 194 (PPGK…QGPP), 195 to 214 (PPGK…SPRS), 215 to 234 (PPGK…QGPP), 236 to 255 (PPGK…QGPP), 256 to 275 (PPGK…SPQS), 276 to 295 (PPGK…QGPP), 297 to 316 (PPGK…QGPP), 317 to 336 (PPGK…QSAR), and 338 to 357 (PPGK…QGPP). Positions 53–357 (PPGKPQGPPP…QEGNNPQGPP (305 aa)) are 15 X 20 AA approximate tandem repeats of P-P-G-K-P-Q-G-P-P-[PAQ]-Q-[GE]-[GD]-[NKS]-[KSQRN]-[PRQS]-[QS] [GPS]-[PQAR]-[PSR]. The O-linked (HexNAc...) serine glycan is linked to S87. The segment covering 91–144 (RSPPGKPQGPPPQGGNQPQGPPPPPGKPQGPPPQGGNKPQGPPPPGKPQGPPPQ) has biased composition (pro residues). At S92 the chain carries Phosphoserine. S150 is modified (phosphoserine; alternate). S150 is a glycosylation site (O-linked (Hex) serine; alternate). Composition is skewed to pro residues over residues 152–205 (RSPP…PPPQ), 213–243 (RSPP…PQGP), 252–266 (QGPP…PPPQ), and 274–324 (QSPP…PQGP). Over residues 325–334 (PAQGGSKSQS) the composition is skewed to low complexity. Residue S330 is glycosylated (O-linked (HexNAc...) serine). Residues 354 to 392 (QGPPPPAGGNPQQPQAPPAGQPQGPPRPPQGGRPSRPPQ) show a composition bias toward pro residues.

Post-translationally, O-glycosylated. O-glycosylation on Ser-87 is prevalent in head and neck cancer patients. O-Glycosylation on Ser-330 has a 5 times prevalence in head and neck cancers. In terms of processing, proteolytically cleaved at the tripeptide Xaa-Pro-Gln, where Xaa in the P(3) position is mostly lysine. The endoprotease may be of microbial origin. Pyroglutamate formation occurs on terminal Gln residues of cleaved peptides. Besides on the N-terminal of mature PBR1, pyroglutamate formation found on at least Gln-58.

The protein resides in the secreted. This is Basic salivary proline-rich protein 1 (PRB1) from Homo sapiens (Human).